The following is a 670-amino-acid chain: UvrABC system protein B (670 aa).

Positions 26 to 183 (EGLEDGLAHQ…RRLAELQYAR (158 aa)) constitute a Helicase ATP-binding domain. Residue 39–46 (GVTGSGKT) coordinates ATP. The Beta-hairpin signature appears at 92-115 (YYDYYQPEAYVPSSDTFIEKDAAV). One can recognise a Helicase C-terminal domain in the interval 431-597 (QVDDLLSEIR…GLNKKVSDVL (167 aa)). Positions 630–665 (DQKIRELEAQMYTHAQNLEFELAAGLRDEIHQLREQ) constitute a UVR domain.

It belongs to the UvrB family. In terms of assembly, forms a heterotetramer with UvrA during the search for lesions. Interacts with UvrC in an incision complex.

Its subcellular location is the cytoplasm. In terms of biological role, the UvrABC repair system catalyzes the recognition and processing of DNA lesions. A damage recognition complex composed of 2 UvrA and 2 UvrB subunits scans DNA for abnormalities. Upon binding of the UvrA(2)B(2) complex to a putative damaged site, the DNA wraps around one UvrB monomer. DNA wrap is dependent on ATP binding by UvrB and probably causes local melting of the DNA helix, facilitating insertion of UvrB beta-hairpin between the DNA strands. Then UvrB probes one DNA strand for the presence of a lesion. If a lesion is found the UvrA subunits dissociate and the UvrB-DNA preincision complex is formed. This complex is subsequently bound by UvrC and the second UvrB is released. If no lesion is found, the DNA wraps around the other UvrB subunit that will check the other stand for damage. This Serratia proteamaculans (strain 568) protein is UvrABC system protein B.